The chain runs to 201 residues: Cardiotrophin-1 (201 aa).

Belongs to the IL-6 superfamily. Highly expressed in heart, skeletal muscle, prostate and ovary. Lower levels in lung, kidney, pancreas, thymus, testis and small intestine. Little or no expression in brain, placenta, liver, spleen, colon or peripheral blood leukocytes.

Its subcellular location is the secreted. In terms of biological role, induces cardiac myocyte hypertrophy in vitro. Binds to and activates the ILST/gp130 receptor. This is Cardiotrophin-1 (CTF1) from Homo sapiens (Human).